The sequence spans 189 residues: UPF0312 protein VPA0850 (189 aa).

An N-terminal signal peptide occupies residues 1–22 (MKKSLFATGLAIAMALPLGAQA).

This sequence belongs to the UPF0312 family. Type 1 subfamily.

Its subcellular location is the periplasm. This is UPF0312 protein VPA0850 from Vibrio parahaemolyticus serotype O3:K6 (strain RIMD 2210633).